The following is a 649-amino-acid chain: Solute carrier family 22 member 17 (649 aa).

Positions 1 to 70 (MAPRVATGTP…GGDGLGSSLS (70 aa)) are disordered. Positions 24-34 (VEITPTSNGQV) are enriched in polar residues. Residues 47–57 (QGEREREREGE) are compositionally biased toward basic and acidic residues. N-linked (GlcNAc...) asparagine glycosylation is found at asparagine 134 and asparagine 143. Transmembrane regions (helical) follow at residues 211–231 (VILE…FLGY), 240–260 (GIVL…AAAG), 265–285 (VMAL…GVYL), 300–320 (ALAG…LALV), 330–350 (MITA…FLES), 414–433 (NIWK…HAIR), 448–468 (FYLC…FLGV), 477–497 (GILL…LGLW), 526–546 (FSVL…LLAA), 557–577 (GLGL…AQRL), and 584–604 (FLQH…IMLL).

This sequence belongs to the major facilitator (TC 2.A.1) superfamily. Organic cation transporter (TC 2.A.1.19) family. Expressed in brain.

It localises to the cell membrane. Its subcellular location is the vacuole membrane. Cell surface receptor for LCN2 (24p3) that plays a key role in iron homeostasis and transport. Able to bind iron-bound LCN2 (holo-24p3), followed by internalization of holo-24p3 and release of iron, thereby increasing intracellular iron concentration and leading to inhibition of apoptosis. Also binds iron-free LCN2 (apo-24p3), followed by internalization of apo-24p3 and its association with an intracellular siderophore, leading to iron chelation and iron transfer to the extracellular medium, thereby reducing intracellular iron concentration and resulting in apoptosis. This Homo sapiens (Human) protein is Solute carrier family 22 member 17 (SLC22A17).